The primary structure comprises 75 residues: MKKTAAIISACMLTFALSACSGSNYVMHTNDGRTIVSDGKPQTDNDTGMISYKDANGNKQQINRTDVKEMVELDQ.

Residues 1 to 19 (MKKTAAIISACMLTFALSA) form the signal peptide. The N-palmitoyl cysteine moiety is linked to residue Cys20. Cys20 is lipidated: S-diacylglycerol cysteine.

To E.coli YgdR.

Its subcellular location is the cell membrane. This is an uncharacterized protein from Escherichia coli O6:H1 (strain CFT073 / ATCC 700928 / UPEC).